Here is a 365-residue protein sequence, read N- to C-terminus: MIIDTTTTKVQAINSFSRLEFLKEVYETIWMLFPILILVLGITIGVLVIVWLEREISASIQQRIGPEYAGPLGILQALADGTKLLFKENLLPSRGDTYLFSIGPSIAVISILLGYLIIPFGSRLVLADLSIGVFLWIAVSSIAPIGLLMSGYGSNNKYSFLGGLRAAAQSISYEIPLTLCVLSISLLSNSSSTVDIVEAQSKYGFWGWNLWRQPIGFIVFIISSLAECERLPFDLPEAEEELVAGYQTEYSGIKFGLFYVASYLNLLISSLFVTVLYLGGWNLSIPYIFISEFFEINKIDGVFGTTIGIFITLAKTFLFLFIPITTRWTLPRLRMDQLLNLGWKFLLPISLGNLLLTTSSQLFSL.

A run of 6 helical transmembrane segments spans residues Leu-32–Leu-52, Tyr-98–Ile-118, Leu-129–Met-149, Leu-257–Gly-279, Val-302–Ile-322, and Leu-338–Thr-358.

The protein belongs to the complex I subunit 1 family. As to quaternary structure, NDH is composed of at least 16 different subunits, 5 of which are encoded in the nucleus.

It localises to the plastid. The protein localises to the chloroplast thylakoid membrane. It carries out the reaction a plastoquinone + NADH + (n+1) H(+)(in) = a plastoquinol + NAD(+) + n H(+)(out). It catalyses the reaction a plastoquinone + NADPH + (n+1) H(+)(in) = a plastoquinol + NADP(+) + n H(+)(out). NDH shuttles electrons from NAD(P)H:plastoquinone, via FMN and iron-sulfur (Fe-S) centers, to quinones in the photosynthetic chain and possibly in a chloroplast respiratory chain. The immediate electron acceptor for the enzyme in this species is believed to be plastoquinone. Couples the redox reaction to proton translocation, and thus conserves the redox energy in a proton gradient. The protein is NAD(P)H-quinone oxidoreductase subunit 1, chloroplastic of Spinacia oleracea (Spinach).